A 194-amino-acid chain; its full sequence is Fe/S biogenesis protein NfuA (194 aa).

2 residues coordinate [4Fe-4S] cluster: cysteine 151 and cysteine 154.

This sequence belongs to the NfuA family. In terms of assembly, homodimer. The cofactor is [4Fe-4S] cluster.

Involved in iron-sulfur cluster biogenesis. Binds a 4Fe-4S cluster, can transfer this cluster to apoproteins, and thereby intervenes in the maturation of Fe/S proteins. Could also act as a scaffold/chaperone for damaged Fe/S proteins. The polypeptide is Fe/S biogenesis protein NfuA (Photobacterium profundum (strain SS9)).